A 359-amino-acid chain; its full sequence is F-box/kelch-repeat protein At1g15670 (359 aa).

Positions 2-49 constitute an F-box domain; sequence ELIPDLPETVAYECLLRSSYKQFPLMASVCKLWQREISLSDFFRHRKA. Kelch repeat units follow at residues 119 to 167, 170 to 217, 219 to 269, 271 to 310, and 313 to 358; these read DLVV…ASDS, NVFV…FHAG, FHVI…CAAG, NGDL…AIRR, and NLVV…CFLE.

The polypeptide is F-box/kelch-repeat protein At1g15670 (Arabidopsis thaliana (Mouse-ear cress)).